The following is a 63-amino-acid chain: Large ribosomal subunit protein uL29 (63 aa).

This sequence belongs to the universal ribosomal protein uL29 family.

The sequence is that of Large ribosomal subunit protein uL29 from Salmonella agona (strain SL483).